The primary structure comprises 380 residues: Acyl-coenzyme A diphosphatase SCS3 (380 aa).

The Cytoplasmic portion of the chain corresponds to 1–7; the sequence is MSSKWFN. The chain crosses the membrane as a helical span at residues 8–28; the sequence is AIHLLVCPLTVLVGYLMNAYG. At 29–43 the chain is on the lumenal side; that stretch reads YGAALQATLNKDGLV. The chain crosses the membrane as a helical span at residues 44–64; it reads NAMLVKKGWFWTSLVGWWCII. Residues 65-88 are Cytoplasmic-facing; it reads RYRAVPGATGRDRRHIVQSFKRYA. A helical transmembrane segment spans residues 89-109; it reads ILTVWWYVFTQGIWFGVGPIM. Residues 110-233 are Lumenal-facing; the sequence is DLVFVYTGGH…GHWAGGHDPS (124 aa). Residues 234-254 traverse the membrane as a helical segment; the sequence is GHVFLATLMCMFLLGELRVFG. The active site involves His235. Residues 255 to 325 are Cytoplasmic-facing; the sequence is RRALAHLYAQ…LTRCIACDHP (71 aa). A helical transmembrane segment spans residues 326 to 346; sequence VIILLTLLVTWLWQLLLTAVA. Topologically, residues 347–356 are lumenal; that stretch reads SRFHTVREHM. His350 is an active-site residue. A helical membrane pass occupies residues 357 to 377; that stretch reads SGLLAAYIVTGLVYARDAAAL. The Cytoplasmic segment spans residues 378-380; sequence RPV.

This sequence belongs to the FIT family. Fungal FIT2B/SCS3 subfamily.

The protein resides in the endoplasmic reticulum membrane. The catalysed reaction is an acyl-CoA + H2O = an acyl-4'-phosphopantetheine + adenosine 3',5'-bisphosphate + 2 H(+). It carries out the reaction (9Z)-octadecenoyl-CoA + H2O = S-(9Z-octadecenoyl)-4'-phosphopantetheine + adenosine 3',5'-bisphosphate + 2 H(+). It catalyses the reaction (5Z,8Z,11Z,14Z)-eicosatetraenoyl-CoA + H2O = S-(5Z,8Z,11Z,14Z-eicosatetraenoyl)-4'-phosphopantetheine + adenosine 3',5'-bisphosphate + 2 H(+). The enzyme catalyses hexadecanoyl-CoA + H2O = S-hexadecanoyl-4'-phosphopantetheine + adenosine 3',5'-bisphosphate + 2 H(+). Its function is as follows. Fatty acyl-coenzyme A (CoA) diphosphatase that hydrolyzes fatty acyl-CoA to yield acyl-4'-phosphopantetheine and adenosine 3',5'-bisphosphate. Preferentially hydrolyzes unsaturated long-chain acyl-CoA substrates in the endoplasmic reticulum (ER) lumen. This catalytic activity is required for maintaining ER structure and for lipid droplets (LDs) biogenesis, which are lipid storage organelles involved in maintaining lipid and energy homeostasis. May directly bind to diacylglycerol (DAGs) and triacylglycerol, which is also important for LD biogenesis. May support directional budding of nacent LDs from the ER into the cytosol by reducing DAG levels at sites of LD formation. May play a role in the regulation of cell morphology and cytoskeletal organization. Involved in phospholipid biosynthesis. This is Acyl-coenzyme A diphosphatase SCS3 from Saccharomyces cerevisiae (strain ATCC 204508 / S288c) (Baker's yeast).